An 898-amino-acid chain; its full sequence is MAVRPGLWPALLGIVLTAWLRGSGAQQSATVANPVPGANPDLLPHFLVEPEDVYIVKNKPVLLVCKAVPATQIFFKCNGEWVRQVDHVIERSTDGSSGLPTMEVRINVSRQQVEKVFGLEEYWCQCVAWSSSGTTKSQKAYIRIAYLRKNFEQEPLAKEVSLEQGIVLPCRPPEGIPPAEVEWLRNEDLVDPSLDPNVYITREHSLVVRQARLADTANYTCVAKNIVARRRSASAAVIVYVNGGWSTWTEWSVCSASCGRGWQKRSRSCTNPAPLNGGAFCEGQNVQKTACATLCPVDGSWSPWSKWSACGLDCTHWRSRECSDPAPRNGGEECRGADLDTRNCTSDLCLHTSSGPEDVALYIGLVAVAVCLILLLLVLVLIYCRKKEGLDSDVADSSILTSGFQPVSIKPSKADNPHLLTIQPDLSTTTTTYQGSLCPRQDGPSPKFQLSNGHLLSPLGSGRHTLHHSSPTSEAEDFVSRLSTQNYFRSLPRGTSNMAYGTFNFLGGRLMIPNTGISLLIPPDAIPRGKIYEIYLTLHKPEDVRLPLAGCQTLLSPIVSCGPPGVLLTRPVILAMDHCGEPSPDSWSLRLKKQSCEGSWEDVLHLGEESPSHLYYCQLEAGACYVFTEQLGRFALVGEALSVAATKRLRLLLFAPVACTSLEYNIRVYCLHDTHDALKEVVQLEKQLGGQLIQEPRVLHFKDSYHNLRLSIHDVPSSLWKSKLLVSYQEIPFYHIWNGTQQYLHCTFTLERVNASTSDLACKVWVWQVEGDGQSFNINFNITKDTRFAEMLALESEGGVPALVGPSAFKIPFLIRQKIITSLDPPCSRGADWRTLAQKLHLDSHLSFFASKPSPTAMILNLWEARHFPNGNLGQLAAAVAGLGQPDAGLFTVSEAEC.

The signal sequence occupies residues M1 to A25. The Extracellular segment spans residues Q26–L361. An Ig-like domain is found at P44–Y141. Intrachain disulfides connect C65/C126, C77/C124, and C170/C221. N-linked (GlcNAc...) asparagine glycosylation is found at N107 and N218. Positions P155 to S234 constitute an Ig-like C2-type domain. 2 TSP type-1 domains span residues N242–P296 and D298–L350. W245, W248, and W251 each carry a C-linked (Man) tryptophan glycan. 3 cysteine pairs are disulfide-bonded: C254–C291, C258–C295, and C269–C281. 2 C-linked (Man) tryptophan glycosylation sites follow: W301 and W304. Intrachain disulfides connect C310–C344, C314–C349, and C322–C334. A glycan (N-linked (GlcNAc...) asparagine) is linked at N343. Residues Y362–I382 traverse the membrane as a helical segment. The Cytoplasmic portion of the chain corresponds to Y383–C898. The ZU5 domain occupies N497–A640. The interval S661 to K679 is interaction with DCC. The 81-residue stretch at Q817–E897 folds into the Death domain.

It belongs to the unc-5 family. As to quaternary structure, homodimer and homooligomer. Interacts with the cytoplasmic part of DCC. Interacts with MAGED1. Interacts with PRKCABP, possibly mediating some interaction with PKC. Interacts (via extracellular domain) with FLRT2 (via extracellular domain). Interacts (via extracellular domain) with FLRT3 (via extracellular domain). In terms of processing, phosphorylated on cytoplasmic tyrosine residues. Phosphorylated by PKC in vitro. Post-translationally, proteolytically cleaved by caspases during apoptosis. The cleavage does not take place when the receptor is associated with netrin ligand. Its cleavage by caspases is required to induce apoptosis. The two extracellular TSRs of UNC5A contain WxxWxxWxxC motifs that can be C-mannosylated on all tryptophans. DPY19L1 preferentially mannosylates the first two tryptophans and DPY19L3 prefers the third. C-mannosylation by DPY19L1 is required for transport of UNC5A from the endoplasmic reticulum to the cell surface. Restricted to central nervous system.

The protein resides in the cell membrane. The protein localises to the membrane raft. Its subcellular location is the cell projection. It localises to the neuron projection. Its function is as follows. Receptor for netrin required for axon guidance. Functions in the netrin signaling pathway and promotes neurite outgrowth in response to NTN1. Mediates axon repulsion of neuronal growth cones in the developing nervous system in response to netrin. Axon repulsion in growth cones may be mediated by its association with DCC that may trigger signaling for repulsion. It also acts as a dependence receptor required for apoptosis induction when not associated with netrin ligand. The sequence is that of Netrin receptor UNC5A (Unc5a) from Mus musculus (Mouse).